Consider the following 574-residue polypeptide: Alpha-farnesene synthase (574 aa).

Positions 326, 330, and 478 each coordinate Mn(2+). A DDXXD motif motif is present at residues 326–330; that stretch reads DDIYD.

It belongs to the terpene synthase family. Tpsd subfamily. The cofactor is Mn(2+).

It is found in the cytoplasm. The catalysed reaction is (2E,6E)-farnesyl diphosphate = (3E,6E)-alpha-farnesene + diphosphate. The protein operates within terpene metabolism; oleoresin biosynthesis. Functionally, involved in sesquiterpene (C15) biosynthesis. The major product is alpha-farnesene. The protein is Alpha-farnesene synthase (PT5) of Pinus taeda (Loblolly pine).